The primary structure comprises 121 residues: SLLEFGMMILEETGKLAVPFYSSYGCYCGWGGKATPKDATDRCCFVHDCCYGNLPDCNPKSDRYKYKRVNGAIVCEQGTSCENRICECDKAAAICFRRNLNTYSKIYMLYPDFLCKGELKC.

7 disulfide bridges follow: C26/C115, C28/C44, C43/C95, C49/C121, C50/C88, C57/C81, and C75/C86. Residues Y27, G29, and G31 each coordinate Ca(2+). Residue H47 is part of the active site. A Ca(2+)-binding site is contributed by D48. Residue D89 is part of the active site.

It belongs to the phospholipase A2 family. Group II subfamily. D49 sub-subfamily. Ca(2+) serves as cofactor. In terms of tissue distribution, expressed by the venom gland.

The protein resides in the secreted. The catalysed reaction is a 1,2-diacyl-sn-glycero-3-phosphocholine + H2O = a 1-acyl-sn-glycero-3-phosphocholine + a fatty acid + H(+). In terms of biological role, PLA2 catalyzes the calcium-dependent hydrolysis of the 2-acyl groups in 3-sn-phosphoglycerides. The polypeptide is Basic phospholipase A2 3 (Daboia russelii (Russel's viper)).